Here is a 418-residue protein sequence, read N- to C-terminus: Histidine--tRNA ligase (418 aa).

It belongs to the class-II aminoacyl-tRNA synthetase family. In terms of assembly, homodimer.

The protein localises to the cytoplasm. The catalysed reaction is tRNA(His) + L-histidine + ATP = L-histidyl-tRNA(His) + AMP + diphosphate + H(+). This is Histidine--tRNA ligase from Thermoanaerobacter sp. (strain X514).